Reading from the N-terminus, the 59-residue chain is Large ribosomal subunit protein uL30 (59 aa).

Belongs to the universal ribosomal protein uL30 family. Part of the 50S ribosomal subunit.

The polypeptide is Large ribosomal subunit protein uL30 (Psychrobacter arcticus (strain DSM 17307 / VKM B-2377 / 273-4)).